Here is a 406-residue protein sequence, read N- to C-terminus: Tryptophan synthase beta chain (406 aa).

At lysine 99 the chain carries N6-(pyridoxal phosphate)lysine.

Belongs to the TrpB family. As to quaternary structure, tetramer of two alpha and two beta chains. It depends on pyridoxal 5'-phosphate as a cofactor.

It carries out the reaction (1S,2R)-1-C-(indol-3-yl)glycerol 3-phosphate + L-serine = D-glyceraldehyde 3-phosphate + L-tryptophan + H2O. It participates in amino-acid biosynthesis; L-tryptophan biosynthesis; L-tryptophan from chorismate: step 5/5. In terms of biological role, the beta subunit is responsible for the synthesis of L-tryptophan from indole and L-serine. In Brucella melitensis biotype 2 (strain ATCC 23457), this protein is Tryptophan synthase beta chain.